The primary structure comprises 320 residues: Mitochondrial thiamine pyrophosphate carrier (320 aa).

Solcar repeat units follow at residues 13-106 (NTKF…LTEL), 116-202 (REFS…LKHL), and 214-309 (NENL…FCNV). The helical transmembrane segment at 19 to 39 (AVAGSVSGLVTRALISPFDVI) threads the bilayer. At serine 51 the chain carries Phosphoserine. Helical transmembrane passes span 87–107 (ILSI…TELV), 122–142 (FVCG…VDVL), 173–193 (VFYK…GLQF), and 220–240 (LLCG…LDLF). Residues 241-246 (KKRLQV) carry the Substrate recognition motif. A helical membrane pass occupies residues 293 to 313 (ALSTGFMFFSYEFFCNVFHCM).

It belongs to the mitochondrial carrier (TC 2.A.29) family. As to expression, expressed in all tissues examined except for placenta. Highest levels in colon, kidney, lung, testis, spleen, and brain.

It is found in the mitochondrion membrane. The catalysed reaction is thiamine phosphate(out) + thiamine diphosphate(in) = thiamine phosphate(in) + thiamine diphosphate(out). In terms of biological role, mitochondrial transporter mediating uptake of thiamine diphosphate into mitochondria. It is not clear if the antiporter activity is affected by the membrane potential or by the proton electrochemical gradient. This Homo sapiens (Human) protein is Mitochondrial thiamine pyrophosphate carrier.